The primary structure comprises 65 residues: ITYTDCTESGQDLCLCEGSNVCGKGNKCILGSNGEENQCVTGEGTPKPQSHNDGDFEEIPEEYLQ.

Residues 1-3 (ITY) are interaction with thrombin active site. 3 disulfides stabilise this stretch: Cys-6/Cys-14, Cys-16/Cys-28, and Cys-22/Cys-39. The segment at 39 to 65 (CVTGEGTPKPQSHNDGDFEEIPEEYLQ) is disordered. The O-linked (GalNAc...) threonine glycan is linked to Thr-45. The tract at residues 55 to 65 (DFEEIPEEYLQ) is interaction with fibrinogen-binding exosite of thrombin. Over residues 55–65 (DFEEIPEEYLQ) the composition is skewed to acidic residues. Sulfotyrosine is present on Tyr-63.

It belongs to the protease inhibitor I14 (hirudin) family.

The protein resides in the secreted. Its function is as follows. Hirudin is a potent thrombin-specific protease inhibitor. It forms a stable non-covalent complex with alpha-thrombin, thereby abolishing its ability to cleave fibrinogen. This chain is Hirudin-2, found in Hirudo medicinalis (Medicinal leech).